Consider the following 169-residue polypeptide: Peptide deformylase (169 aa).

The Fe cation site is built by cysteine 91 and histidine 133. The active site involves glutamate 134. Fe cation is bound at residue histidine 137.

It belongs to the polypeptide deformylase family. The cofactor is Fe(2+).

The catalysed reaction is N-terminal N-formyl-L-methionyl-[peptide] + H2O = N-terminal L-methionyl-[peptide] + formate. Removes the formyl group from the N-terminal Met of newly synthesized proteins. Requires at least a dipeptide for an efficient rate of reaction. N-terminal L-methionine is a prerequisite for activity but the enzyme has broad specificity at other positions. This is Peptide deformylase from Aliivibrio salmonicida (strain LFI1238) (Vibrio salmonicida (strain LFI1238)).